Reading from the N-terminus, the 452-residue chain is Sulfide:quinone oxidoreductase, mitochondrial (452 aa).

FAD-binding positions include 54 to 55 (AG), Glu-77, Gln-85, and Val-120. Residue Cys-204 is the Cysteine persulfide intermediate of the active site. Cys-204 and Cys-380 are joined by a disulfide. FAD contacts are provided by residues Asp-337 and 345–348 (KTAA). Cys-380 acts as the Cysteine persulfide intermediate in catalysis.

Belongs to the SQRD family. FAD serves as cofactor.

It localises to the mitochondrion. It catalyses the reaction ubiquinone-10 + hydrogen sulfide + sulfite + 2 H(+) = ubiquinol-10 + thiosulfate. The catalysed reaction is a quinone + hydrogen sulfide + glutathione + H(+) = S-sulfanylglutathione + a quinol. Functionally, catalyzes the oxidation of hydrogen sulfide, with the help of a quinone. This Dictyostelium discoideum (Social amoeba) protein is Sulfide:quinone oxidoreductase, mitochondrial.